Here is a 213-residue protein sequence, read N- to C-terminus: Thymidylate kinase (213 aa).

10–17 provides a ligand contact to ATP; the sequence is GLEGAGKT.

Belongs to the thymidylate kinase family.

It catalyses the reaction dTMP + ATP = dTDP + ADP. In terms of biological role, phosphorylation of dTMP to form dTDP in both de novo and salvage pathways of dTTP synthesis. The protein is Thymidylate kinase of Klebsiella pneumoniae subsp. pneumoniae (strain ATCC 700721 / MGH 78578).